A 243-amino-acid polypeptide reads, in one-letter code: UPF0246 protein spyM18_2163 (243 aa).

The protein belongs to the UPF0246 family.

This Streptococcus pyogenes serotype M18 (strain MGAS8232) protein is UPF0246 protein spyM18_2163.